The primary structure comprises 345 residues: Metal-dependent phosphohydrolase cns2 (345 aa).

Residues 70 to 171 (RLEHSVGAFI…QLCADRLDYA (102 aa)) form the HD domain.

As to quaternary structure, interacts with cns1.

It localises to the lipid droplet. Its pathway is secondary metabolite biosynthesis. Metal-dependent phosphohydrolase; part of the gene cluster that mediates the biosynthesis of cordycepin (COR) and pentostatin (PTN), two adenosine analogs with related bioactivity profiles as both mimic adenosine and can inhibit some of the processes that are adenosine dependent. Within the pathway, cns2 catalyzes dephosphorylation of 3'-AMP to produce 2'-carbonyl-3'-deoxyadenosine (2'-C-3'-dA). The first step of cordycepin biosynthesis involves hydroxyl phosphorylation of the 3'-OH position on adenosine to produce adenosine-3'-monophosphate (3'-AMP), catalyzed by kinase activity of cns3. Next, 3'-AMP is dephosphorylated to 2'-carbonyl-3'-deoxyadenosine by cns2, which is finally converted to cordycepin (3'-deoxyadenosine) by the oxidoreductase cns1. This chain is Metal-dependent phosphohydrolase cns2, found in Cordyceps militaris (strain CM01) (Caterpillar fungus).